We begin with the raw amino-acid sequence, 410 residues long: SPbeta prophage-derived uncharacterized protein YonV (410 aa).

The chain is SPbeta prophage-derived uncharacterized protein YonV (yonV) from Bacillus subtilis (strain 168).